An 834-amino-acid chain; its full sequence is Protein translocase subunit SecA (834 aa).

Residues glutamine 85, 103–107, and aspartate 491 each bind ATP; that span reads GEGKT. Zn(2+) contacts are provided by cysteine 818, cysteine 820, cysteine 829, and cysteine 830.

The protein belongs to the SecA family. As to quaternary structure, monomer and homodimer. Part of the essential Sec protein translocation apparatus which comprises SecA, SecYEG and auxiliary proteins SecDF. Other proteins may also be involved. Zn(2+) is required as a cofactor.

The protein resides in the cell membrane. The protein localises to the cytoplasm. The enzyme catalyses ATP + H2O + cellular proteinSide 1 = ADP + phosphate + cellular proteinSide 2.. Part of the Sec protein translocase complex. Interacts with the SecYEG preprotein conducting channel. Has a central role in coupling the hydrolysis of ATP to the transfer of proteins into and across the cell membrane, serving as an ATP-driven molecular motor driving the stepwise translocation of polypeptide chains across the membrane. The chain is Protein translocase subunit SecA from Clostridium kluyveri (strain ATCC 8527 / DSM 555 / NBRC 12016 / NCIMB 10680 / K1).